The chain runs to 727 residues: Translation initiation factor IF-2, mitochondrial (727 aa).

Residues 1 to 29 (MNQKLLKLENLLRFHTICRQVHSPSQRRL) constitute a mitochondrion transit peptide. A tr-type G domain is found at 178-346 (PRSPVVTVMG…ATIALAEILE (169 aa)). The tract at residues 187–194 (GHVDHGKT) is G1. A GTP-binding site is contributed by 187–194 (GHVDHGKT). The G2 stretch occupies residues 212-216 (GITQH). GTP contacts are provided by residues 234 to 237 (DTPG) and 288 to 291 (NKCD). A G3 region spans residues 234–237 (DTPG). The interval 288–291 (NKCD) is G4. Residues 324 to 326 (SAL) are G5. T688 bears the Phosphothreonine mark.

It belongs to the TRAFAC class translation factor GTPase superfamily. Classic translation factor GTPase family. IF-2 subfamily. In terms of assembly, monomer.

It is found in the mitochondrion. In terms of biological role, one of the essential components for the initiation of protein synthesis. Protects formylmethionyl-tRNA from spontaneous hydrolysis and promotes its binding to the 30S ribosomal subunits. Also involved in the hydrolysis of GTP during the formation of the 70S ribosomal complex. The protein is Translation initiation factor IF-2, mitochondrial (Mtif2) of Mus musculus (Mouse).